The chain runs to 333 residues: Cytochrome f (333 aa).

The first 44 residues, Met1–Ala44, serve as a signal peptide directing secretion. 4 residues coordinate heme: Tyr45, Cys66, Cys69, and His70. A helical transmembrane segment spans residues Gly301–Leu318.

It belongs to the cytochrome f family. In terms of assembly, the 4 large subunits of the cytochrome b6-f complex are cytochrome b6, subunit IV (17 kDa polypeptide, PetD), cytochrome f and the Rieske protein, while the 4 small subunits are PetG, PetL, PetM and PetN. The complex functions as a dimer. Heme serves as cofactor.

The protein localises to the cellular thylakoid membrane. In terms of biological role, component of the cytochrome b6-f complex, which mediates electron transfer between photosystem II (PSII) and photosystem I (PSI), cyclic electron flow around PSI, and state transitions. The chain is Cytochrome f (petA) from Desmonostoc sp. (strain PCC 7906) (Nostoc sp. (strain PCC 7906)).